Consider the following 185-residue polypeptide: Ribosome maturation factor RimM (185 aa).

The PRC barrel domain occupies 106–185 (SGEYYWKDLL…IIEVDWDPGF (80 aa)).

This sequence belongs to the RimM family. Binds ribosomal protein uS19.

It localises to the cytoplasm. In terms of biological role, an accessory protein needed during the final step in the assembly of 30S ribosomal subunit, possibly for assembly of the head region. Essential for efficient processing of 16S rRNA. May be needed both before and after RbfA during the maturation of 16S rRNA. It has affinity for free ribosomal 30S subunits but not for 70S ribosomes. The chain is Ribosome maturation factor RimM from Sodalis glossinidius (strain morsitans).